Reading from the N-terminus, the 146-residue chain is Hemoglobin subunit beta-1/2 (146 aa).

Position 1 is an N-acetylvaline (V1). The Globin domain maps to 2 to 146 (HLTGEEKSGL…VANALAHKYH (145 aa)). Position 12 is a phosphothreonine (T12). K59 bears the N6-acetyllysine mark. Position 63 (H63) interacts with heme b. K82 is subject to N6-acetyllysine. Residue H92 participates in heme b binding. At C93 the chain carries S-nitrosocysteine. N6-acetyllysine is present on K144.

It belongs to the globin family. Heterotetramer of two alpha chains and two beta chains. As to expression, red blood cells.

In terms of biological role, involved in oxygen transport from the lung to the various peripheral tissues. The polypeptide is Hemoglobin subunit beta-1/2 (HBB) (Physeter macrocephalus (Sperm whale)).